The chain runs to 319 residues: Glycine--tRNA ligase alpha subunit (319 aa).

It belongs to the class-II aminoacyl-tRNA synthetase family. As to quaternary structure, tetramer of two alpha and two beta subunits.

It localises to the cytoplasm. The enzyme catalyses tRNA(Gly) + glycine + ATP = glycyl-tRNA(Gly) + AMP + diphosphate. The polypeptide is Glycine--tRNA ligase alpha subunit (Oenococcus oeni (strain ATCC BAA-331 / PSU-1)).